The following is a 346-amino-acid chain: Protein-glutamate methylesterase/protein-glutamine glutaminase (346 aa).

The Response regulatory domain maps to 6-123 (KVLVVDDSAF…SLDLEKVRDL (118 aa)). 4-aspartylphosphate is present on aspartate 57. The CheB-type methylesterase domain occupies 155–346 (PFDKTIIVIG…ADSIVRQCKR (192 aa)). Active-site residues include serine 166, histidine 193, and aspartate 289.

Belongs to the CheB family. Post-translationally, phosphorylated by CheA. Phosphorylation of the N-terminal regulatory domain activates the methylesterase activity.

It is found in the cytoplasm. It catalyses the reaction [protein]-L-glutamate 5-O-methyl ester + H2O = L-glutamyl-[protein] + methanol + H(+). The enzyme catalyses L-glutaminyl-[protein] + H2O = L-glutamyl-[protein] + NH4(+). Its function is as follows. Involved in chemotaxis. Part of a chemotaxis signal transduction system that modulates chemotaxis in response to various stimuli. Catalyzes the demethylation of specific methylglutamate residues introduced into the chemoreceptors (methyl-accepting chemotaxis proteins or MCP) by CheR. Also mediates the irreversible deamidation of specific glutamine residues to glutamic acid. This Halalkalibacterium halodurans (strain ATCC BAA-125 / DSM 18197 / FERM 7344 / JCM 9153 / C-125) (Bacillus halodurans) protein is Protein-glutamate methylesterase/protein-glutamine glutaminase.